The following is a 332-amino-acid chain: Ketol-acid reductoisomerase (NADP(+)) (332 aa).

A KARI N-terminal Rossmann domain is found at 4–184; that stretch reads ARMYYDEDAD…GGTRAGILET (181 aa). Residues 27–30, S53, S55, and 85–88 contribute to the NADP(+) site; these read YGSQ and DEVQ. Residue H110 is part of the active site. Residue G136 participates in NADP(+) binding. The region spanning 185–330 is the KARI C-terminal knotted domain; that stretch reads TFREEAETDL…ADLRKMMSWL (146 aa). D193, E197, E229, and E233 together coordinate Mg(2+). Position 254 (S254) interacts with substrate.

The protein belongs to the ketol-acid reductoisomerase family. Mg(2+) serves as cofactor.

It catalyses the reaction (2R)-2,3-dihydroxy-3-methylbutanoate + NADP(+) = (2S)-2-acetolactate + NADPH + H(+). The enzyme catalyses (2R,3R)-2,3-dihydroxy-3-methylpentanoate + NADP(+) = (S)-2-ethyl-2-hydroxy-3-oxobutanoate + NADPH + H(+). Its pathway is amino-acid biosynthesis; L-isoleucine biosynthesis; L-isoleucine from 2-oxobutanoate: step 2/4. The protein operates within amino-acid biosynthesis; L-valine biosynthesis; L-valine from pyruvate: step 2/4. In terms of biological role, involved in the biosynthesis of branched-chain amino acids (BCAA). Catalyzes an alkyl-migration followed by a ketol-acid reduction of (S)-2-acetolactate (S2AL) to yield (R)-2,3-dihydroxy-isovalerate. In the isomerase reaction, S2AL is rearranged via a Mg-dependent methyl migration to produce 3-hydroxy-3-methyl-2-ketobutyrate (HMKB). In the reductase reaction, this 2-ketoacid undergoes a metal-dependent reduction by NADPH to yield (R)-2,3-dihydroxy-isovalerate. The chain is Ketol-acid reductoisomerase (NADP(+)) from Gloeobacter violaceus (strain ATCC 29082 / PCC 7421).